The sequence spans 260 residues: Activator of 90 kDa heat shock protein ATPase homolog 2 (260 aa).

The protein belongs to the AHA1 family.

Co-chaperone that stimulates HSP90 ATPase activity. This is Activator of 90 kDa heat shock protein ATPase homolog 2 (AHSA2) from Bos taurus (Bovine).